The chain runs to 631 residues: Dolichyl-diphosphooligosaccharide--protein glycosyltransferase subunit 2 (631 aa).

The first 22 residues, 1-22 (MASPGASTVFLLALTILAGTQA), serve as a signal peptide directing secretion. Residues 23 to 540 (LTPTHYLTKP…REPEKRPPTV (518 aa)) are Lumenal-facing. A glycan (N-linked (GlcNAc...) asparagine) is linked at asparagine 106. Lysine 154 is covalently cross-linked (Glycyl lysine isopeptide (Lys-Gly) (interchain with G-Cter in ubiquitin)). Residues 541–561 (VSNTFTALILSPLLLLFALWI) traverse the membrane as a helical segment. Topologically, residues 562 to 571 (RIGANVSNFT) are cytoplasmic. A helical transmembrane segment spans residues 572–592 (FAPSTIIFHLGHAAMLGLMYV). Residues 593–596 (YWTQ) lie on the Lumenal side of the membrane. The helical transmembrane segment at 597 to 617 (LNMFQTLKYLAILGSVTFLAG) threads the bilayer. Over 618 to 631 (NRMLAQQAIKRTAH) the chain is Cytoplasmic.

It belongs to the SWP1 family. In terms of assembly, component of the oligosaccharyltransferase (OST) complex. OST exists in two different complex forms which contain common core subunits RPN1, RPN2, OST48, OST4, DAD1 and TMEM258, either STT3A or STT3B as catalytic subunits, and form-specific accessory subunits. STT3A complex assembly occurs through the formation of 3 subcomplexes. Subcomplex 1 contains RPN1 and TMEM258, subcomplex 2 contains the STT3A-specific subunits STT3A, DC2/OSTC, and KCP2 as well as the core subunit OST4, and subcomplex 3 contains RPN2, DAD1, and OST48. The STT3A complex can form stable complexes with the Sec61 complex or with both the Sec61 and TRAP complexes. Interacts with DDI2. Interacts with TMEM35A/NACHO.

It localises to the endoplasmic reticulum. The protein resides in the endoplasmic reticulum membrane. It participates in protein modification; protein glycosylation. Subunit of the oligosaccharyl transferase (OST) complex that catalyzes the initial transfer of a defined glycan (Glc(3)Man(9)GlcNAc(2) in eukaryotes) from the lipid carrier dolichol-pyrophosphate to an asparagine residue within an Asn-X-Ser/Thr consensus motif in nascent polypeptide chains, the first step in protein N-glycosylation. N-glycosylation occurs cotranslationally and the complex associates with the Sec61 complex at the channel-forming translocon complex that mediates protein translocation across the endoplasmic reticulum (ER). All subunits are required for a maximal enzyme activity. In Canis lupus familiaris (Dog), this protein is Dolichyl-diphosphooligosaccharide--protein glycosyltransferase subunit 2.